The sequence spans 491 residues: AP-2 complex subunit mu (491 aa).

Residues serine 179, serine 180, and serine 181 each carry the phosphoserine modification. An MHD domain is found at 209-490; sequence KDEVFLYVNE…ISKAGSYEVR (282 aa).

This sequence belongs to the adaptor complexes medium subunit family. Adaptor protein complex 2 (AP-2) is a heterotetramer composed of two large adaptins (alpha-type subunit APL3 and beta-type subunit APL1), a medium chain (mu-type subunit APM4) and a small adaptin (sigma-type subunit APS2).

The protein localises to the membrane. The protein resides in the clathrin-coated pit. It localises to the cytoplasmic vesicle. It is found in the clathrin-coated vesicle membrane. Its function is as follows. Component of the adaptor complexes which link clathrin to receptors in coated vesicles. Clathrin-associated protein complexes are believed to interact with the cytoplasmic tails of membrane proteins, leading to their selection and concentration. This chain is AP-2 complex subunit mu (APM4), found in Saccharomyces cerevisiae (strain ATCC 204508 / S288c) (Baker's yeast).